A 294-amino-acid polypeptide reads, in one-letter code: Lipoyl synthase (294 aa).

Residues Cys-41, Cys-46, Cys-52, Cys-67, Cys-71, Cys-74, and Ser-281 each contribute to the [4Fe-4S] cluster site. The 218-residue stretch at 53 to 270 (FNNGTATFMI…KLESLAMGFT (218 aa)) folds into the Radical SAM core domain.

Belongs to the radical SAM superfamily. Lipoyl synthase family. The cofactor is [4Fe-4S] cluster.

It localises to the cytoplasm. It catalyses the reaction [[Fe-S] cluster scaffold protein carrying a second [4Fe-4S](2+) cluster] + N(6)-octanoyl-L-lysyl-[protein] + 2 oxidized [2Fe-2S]-[ferredoxin] + 2 S-adenosyl-L-methionine + 4 H(+) = [[Fe-S] cluster scaffold protein] + N(6)-[(R)-dihydrolipoyl]-L-lysyl-[protein] + 4 Fe(3+) + 2 hydrogen sulfide + 2 5'-deoxyadenosine + 2 L-methionine + 2 reduced [2Fe-2S]-[ferredoxin]. The protein operates within protein modification; protein lipoylation via endogenous pathway; protein N(6)-(lipoyl)lysine from octanoyl-[acyl-carrier-protein]: step 2/2. Functionally, catalyzes the radical-mediated insertion of two sulfur atoms into the C-6 and C-8 positions of the octanoyl moiety bound to the lipoyl domains of lipoate-dependent enzymes, thereby converting the octanoylated domains into lipoylated derivatives. The sequence is that of Lipoyl synthase from Baumannia cicadellinicola subsp. Homalodisca coagulata.